Here is a 305-residue protein sequence, read N- to C-terminus: Translation initiation factor eIF2B subunit alpha (305 aa).

Ser-2 carries the N-acetylserine modification. Residue Thr-291 is modified to Phosphothreonine.

This sequence belongs to the eIF-2B alpha/beta/delta subunits family. Component of the translation initiation factor 2B (eIF2B) complex which is a heterodecamer of two sets of five different subunits: alpha, beta, gamma, delta and epsilon. Subunits alpha, beta and delta comprise a regulatory subcomplex and subunits epsilon and gamma comprise a catalytic subcomplex. Within the complex, the hexameric regulatory complex resides at the center, with the two heterodimeric catalytic subcomplexes bound on opposite sides.

The protein resides in the cytoplasm. Its subcellular location is the cytosol. Acts as a component of the translation initiation factor 2B (eIF2B) complex, which catalyzes the exchange of GDP for GTP on the eukaryotic initiation factor 2 (eIF2) complex gamma subunit. Its guanine nucleotide exchange factor activity is repressed when bound to eIF2 complex phosphorylated on the alpha subunit, thereby limiting the amount of methionyl-initiator methionine tRNA available to the ribosome and consequently global translation is repressed. It activates the translation of GCN4 in response to low amino acid, carbon, or purine availability, by suppressing the inhibitory effects of multiple uORFs present in the leader of GCN4 mRNA. It may promote either repression or activation of GCN4 expression depending on amino acid availability. Modulation of GCN3 regulatory function in response to amino acid availability occurs post-translationally. The protein is Translation initiation factor eIF2B subunit alpha of Saccharomyces cerevisiae (strain ATCC 204508 / S288c) (Baker's yeast).